The following is a 358-amino-acid chain: GDSL esterase/lipase At2g30220 (358 aa).

An N-terminal signal peptide occupies residues 1 to 22 (MYISKTIVFGLFVATLLVSCNA). A glycan (N-linked (GlcNAc...) asparagine) is linked at N25. S40 (nucleophile) is an active-site residue. N-linked (GlcNAc...) asparagine glycosylation is found at N102 and N324. Active-site residues include D332 and H335.

The protein belongs to the 'GDSL' lipolytic enzyme family.

It is found in the secreted. The chain is GDSL esterase/lipase At2g30220 from Arabidopsis thaliana (Mouse-ear cress).